A 488-amino-acid chain; its full sequence is MGIAHTEWESVIGLEVHVELNTESKLFSPARNHFGDEPNTNISPVCTGMPGSLPVLNKDAVRKAVLFGCAVEGDVALFSRFDRKSYFYPDSPRNFQITQYEHPIVRGGCIRAVVEGEEKTFELAQTHLEDDAGMLKHFGDFAGVDYNRAGVPLIEIVSKPCMFSAEDAVAYANALVSILGYIGISDCNMEEGSIRFDVNISVRPRGSRELRNKVEIKNMNSFTFMAQALEAEKRRQIEEYLSYPNEDPKKVVPAATYRWDPEKKKTVLMRLKERAEDYMYFVEPDLPVLQITETYIDEVRQTLPELPHSKYMRYITDFDIAEDLAMILVSDRHTAHFFETATMSCKNYRALSNWITVEFAGRCKARGKTLPFTGILPEWVAQLVNFIDRGVITGKIAKEIADRMVSSFGESPEDILRRHPSLLPMTDDHALRAIVKEVVAQNTASVADYKNGKAKALGFLVGQIMKRTEGKAPPKRVNELLLAAMRDM.

This sequence belongs to the GatB/GatE family. GatB subfamily. As to quaternary structure, heterotrimer of A, B and C subunits.

It carries out the reaction L-glutamyl-tRNA(Gln) + L-glutamine + ATP + H2O = L-glutaminyl-tRNA(Gln) + L-glutamate + ADP + phosphate + H(+). The enzyme catalyses L-aspartyl-tRNA(Asn) + L-glutamine + ATP + H2O = L-asparaginyl-tRNA(Asn) + L-glutamate + ADP + phosphate + 2 H(+). In terms of biological role, allows the formation of correctly charged Asn-tRNA(Asn) or Gln-tRNA(Gln) through the transamidation of misacylated Asp-tRNA(Asn) or Glu-tRNA(Gln) in organisms which lack either or both of asparaginyl-tRNA or glutaminyl-tRNA synthetases. The reaction takes place in the presence of glutamine and ATP through an activated phospho-Asp-tRNA(Asn) or phospho-Glu-tRNA(Gln). In Chlamydia trachomatis serovar A (strain ATCC VR-571B / DSM 19440 / HAR-13), this protein is Aspartyl/glutamyl-tRNA(Asn/Gln) amidotransferase subunit B.